The primary structure comprises 177 residues: Putative pre-16S rRNA nuclease (177 aa).

The protein belongs to the YqgF nuclease family.

It localises to the cytoplasm. Its function is as follows. Could be a nuclease involved in processing of the 5'-end of pre-16S rRNA. The protein is Putative pre-16S rRNA nuclease of Psychrobacter arcticus (strain DSM 17307 / VKM B-2377 / 273-4).